The following is a 624-amino-acid chain: Probable pectinesterase/pectinesterase inhibitor 47 (624 aa).

A signal peptide spans 1–19 (MQTHSSSLVFLALLCLSWA). The interval 24 to 88 (PTRPPSQPPS…PSPLPPNIAC (65 aa)) is disordered. Residues 25-84 (TRPPSQPPSHPPIQPSSQPPTQPPSQPPTQPPTQPPSHPPTQPPTPPPSQSPSQPSPLPP) are compositionally biased toward pro residues. The interval 74-236 (QSPSQPSPLP…TRLYSVSLGL (163 aa)) is pectinesterase inhibitor 47. N-linked (GlcNAc...) asparagine glycans are attached at residues asparagine 225, asparagine 330, asparagine 369, and asparagine 376. The tract at residues 307–606 (AVTVGPYETD…FTVYNFTLGD (300 aa)) is pectinesterase 47. Threonine 385 provides a ligand contact to substrate. Asparagine 387 is a glycosylation site (N-linked (GlcNAc...) asparagine). Glutamine 415 lines the substrate pocket. Aspartate 438 serves as the catalytic Proton donor; for pectinesterase activity. An intrachain disulfide couples cysteine 452 to cysteine 472. Aspartate 459 serves as the catalytic Nucleophile; for pectinesterase activity. An N-linked (GlcNAc...) asparagine glycan is attached at asparagine 505. The substrate site is built by arginine 527 and tryptophan 529. Residues asparagine 555, asparagine 596, and asparagine 601 are each glycosylated (N-linked (GlcNAc...) asparagine).

It in the N-terminal section; belongs to the PMEI family. The protein in the C-terminal section; belongs to the pectinesterase family.

Its subcellular location is the secreted. It localises to the cell wall. It catalyses the reaction [(1-&gt;4)-alpha-D-galacturonosyl methyl ester](n) + n H2O = [(1-&gt;4)-alpha-D-galacturonosyl](n) + n methanol + n H(+). The protein operates within glycan metabolism; pectin degradation; 2-dehydro-3-deoxy-D-gluconate from pectin: step 1/5. Its function is as follows. Acts in the modification of cell walls via demethylesterification of cell wall pectin. In Arabidopsis thaliana (Mouse-ear cress), this protein is Probable pectinesterase/pectinesterase inhibitor 47 (PME47).